The primary structure comprises 143 residues: Crossover junction endodeoxyribonuclease Hjc (143 aa).

E12 is a Mg(2+) binding site. The active site involves S32. The Mg(2+) site is built by D42 and E55.

This sequence belongs to the Holliday junction resolvase Hjc family. Homodimer. Interacts with PCNA subunit PCNA1. Requires Mg(2+) as cofactor.

It catalyses the reaction Endonucleolytic cleavage at a junction such as a reciprocal single-stranded crossover between two homologous DNA duplexes (Holliday junction).. With respect to regulation, autoinhibits at very high concentrations, possibly because of extreme junction distortion. Inhibition (and activity at low concentrations of enzyme) is stimulated by dsDNA and Sso7d. Activity stimulated by PCNA subunit PCNA1. A structure-specific endonuclease that resolves Holliday junction (HJ) intermediates during genetic recombination; may have some degree of sequence preference in a mobile junction. Cleaves 4-way DNA junctions introducing paired nicks in opposing strands, leaving a 5'-terminal phosphate and a 3'-terminal hydroxyl group that are subsequently ligated to produce recombinant products. Can cleave all 4 strands 3 bases 3' of the junction center. Cleaves both mobile and immobile junctions. Modifies the structure of the 4-way DNA junction, a model Holliday junction structure. The protein forms multiple complexes with 4-way DNA, suggesting more than 1 homodimer can bind to each junction. The sequence is that of Crossover junction endodeoxyribonuclease Hjc from Saccharolobus solfataricus (strain ATCC 35092 / DSM 1617 / JCM 11322 / P2) (Sulfolobus solfataricus).